Consider the following 283-residue polypeptide: MKTPFSKMDGLGNQIIVADMRESTQALTPQAILALSADPEMHFDQIMAIRNPTKNEADFHIEIWNADGSKAKACGNGTRCVIAWLTDHNFGENFRLEAPTGIIEGKRQADNLISVDMGCPNFNAKEMPVSREIVDTNHIDITAGPLKDACLISIGNLHAIFFVENDVQHIPLEKYGPKLEHDPLFPERCNISIACITSKKSLNLRTWERGAGLTQACGSAACAGAVAAYRRSLTQRHIDVNLPGGKLNIFYREDDHIIMTGPIKYQFSGFLNPLTGCYKKDNS.

Substrate contacts are provided by Asn13, Gln45, and Asn65. Cys74 serves as the catalytic Proton donor. Substrate is bound by residues 75–76 (GN), Asn156, Asn190, and 208–209 (ER). Cys217 serves as the catalytic Proton acceptor. 218–219 (GS) contributes to the substrate binding site.

It belongs to the diaminopimelate epimerase family. As to quaternary structure, homodimer.

The protein localises to the cytoplasm. It catalyses the reaction (2S,6S)-2,6-diaminopimelate = meso-2,6-diaminopimelate. It participates in amino-acid biosynthesis; L-lysine biosynthesis via DAP pathway; DL-2,6-diaminopimelate from LL-2,6-diaminopimelate: step 1/1. Catalyzes the stereoinversion of LL-2,6-diaminopimelate (L,L-DAP) to meso-diaminopimelate (meso-DAP), a precursor of L-lysine and an essential component of the bacterial peptidoglycan. In Bartonella tribocorum (strain CIP 105476 / IBS 506), this protein is Diaminopimelate epimerase.